Here is a 130-residue protein sequence, read N- to C-terminus: Odontogenesis associated phosphoprotein (130 aa).

The first 23 residues, 1 to 23, serve as a signal peptide directing secretion; that stretch reads MARRHCFSYWLLVCWLVVTVAEG.

In terms of tissue distribution, highly expressed in placenta.

It localises to the secreted. May promote nucleation of hydroxyapatite. The sequence is that of Odontogenesis associated phosphoprotein from Homo sapiens (Human).